Consider the following 284-residue polypeptide: uncharacterized protein (284 aa).

This sequence belongs to the AtsA family.

This is an uncharacterized protein from Mycobacterium leprae (strain TN).